A 605-amino-acid polypeptide reads, in one-letter code: Tegument protein UL47 homolog (605 aa).

The segment at 1 to 75 is disordered; sequence MATDNARPRS…DPWKLEPAND (75 aa). The span at 8-17 shows a compositional bias: basic residues; that stretch reads PRSRSLRRKS. Positions 54-69 are enriched in basic and acidic residues; it reads GADRDPGTRRGIDPWK.

Belongs to the alphaherpesvirinae HHV-1 UL47 family. As to quaternary structure, interacts with US3 kinase. Interacts with UL31 and UL34; these interactions seem important for efficient virion nuclear egress. Interacts with UL41/VHS. In terms of processing, phosphorylated by US3. This phosphorylation is required for proper nuclear localization.

The protein localises to the virion tegument. The protein resides in the host nucleus. It localises to the host cytoplasm. Functionally, tegument protein that can bind to various RNA transcripts. Plays a role in the attenuation of selective viral and cellular mRNA degradation by modulating the activity of host shutoff RNase UL41/VHS. Also plays a role in the primary envelopment of virions in the perinuclear space, probably by interacting with two nuclear egress proteins UL31 and UL34. This Amazona oratrix (yellow-headed parrot) protein is Tegument protein UL47 homolog (sORF1).